We begin with the raw amino-acid sequence, 237 residues long: Ribosomal RNA small subunit methyltransferase G (237 aa).

Residues glycine 78, phenylalanine 83, 129–130 (AE), and arginine 148 contribute to the S-adenosyl-L-methionine site.

Belongs to the methyltransferase superfamily. RNA methyltransferase RsmG family.

It is found in the cytoplasm. Its function is as follows. Specifically methylates the N7 position of a guanine in 16S rRNA. In Streptococcus pyogenes serotype M1, this protein is Ribosomal RNA small subunit methyltransferase G.